The primary structure comprises 137 residues: Small ribosomal subunit protein uS9 (137 aa).

Positions 100-137 (ENRPPLKSEGYLTRDPRAKERKKYGLHKARKAPQYSKR) are disordered. Positions 118–137 (KERKKYGLHKARKAPQYSKR) are enriched in basic residues.

The protein belongs to the universal ribosomal protein uS9 family.

This is Small ribosomal subunit protein uS9 from Microcystis aeruginosa (strain NIES-843 / IAM M-2473).